The primary structure comprises 226 residues: ATP synthase F(0) complex subunit a (226 aa).

6 helical membrane passes run 5-25, 68-88, 97-117, 138-158, 160-180, and 189-209; these read LFASFIAPTILGLPAAVLIIL, WSLMLMWLIIFIATTNLLGLL, QLSMNLAMAIPLWAGAVTTGF, IPMLVIIETISLFIQPMALAV, LTANITAGHLLMHLIGSATLA, and TLIIFTVLILLTMLEIAVALI.

It belongs to the ATPase A chain family. In terms of assembly, component of the ATP synthase complex composed at least of ATP5F1A/subunit alpha, ATP5F1B/subunit beta, ATP5MC1/subunit c (homooctomer), MT-ATP6/subunit a, MT-ATP8/subunit 8, ATP5ME/subunit e, ATP5MF/subunit f, ATP5MG/subunit g, ATP5MK/subunit k, ATP5MJ/subunit j, ATP5F1C/subunit gamma, ATP5F1D/subunit delta, ATP5F1E/subunit epsilon, ATP5PF/subunit F6, ATP5PB/subunit b, ATP5PD/subunit d, ATP5PO/subunit OSCP. ATP synthase complex consists of a soluble F(1) head domain (subunits alpha(3) and beta(3)) - the catalytic core - and a membrane F(0) domain - the membrane proton channel (subunits c, a, 8, e, f, g, k and j). These two domains are linked by a central stalk (subunits gamma, delta, and epsilon) rotating inside the F1 region and a stationary peripheral stalk (subunits F6, b, d, and OSCP). Interacts with DNAJC30; interaction is direct.

Its subcellular location is the mitochondrion inner membrane. The catalysed reaction is H(+)(in) = H(+)(out). In terms of biological role, subunit a, of the mitochondrial membrane ATP synthase complex (F(1)F(0) ATP synthase or Complex V) that produces ATP from ADP in the presence of a proton gradient across the membrane which is generated by electron transport complexes of the respiratory chain. ATP synthase complex consist of a soluble F(1) head domain - the catalytic core - and a membrane F(1) domain - the membrane proton channel. These two domains are linked by a central stalk rotating inside the F(1) region and a stationary peripheral stalk. During catalysis, ATP synthesis in the catalytic domain of F(1) is coupled via a rotary mechanism of the central stalk subunits to proton translocation. With the subunit c (ATP5MC1), forms the proton-conducting channel in the F(0) domain, that contains two crucial half-channels (inlet and outlet) that facilitate proton movement from the mitochondrial intermembrane space (IMS) into the matrix. Protons are taken up via the inlet half-channel and released through the outlet half-channel, following a Grotthuss mechanism. The polypeptide is ATP synthase F(0) complex subunit a (Gorilla gorilla gorilla (Western lowland gorilla)).